Here is a 688-residue protein sequence, read N- to C-terminus: Lectin-domain containing receptor kinase VI.3 (688 aa).

The N-terminal stretch at 1 to 14 is a signal peptide; sequence MLVLFLLLTIPTRA. At 15-306 the chain is on the extracellular side; that stretch reads QRTTTETPKT…KRGYNSQVLA (292 aa). Positions 22–271 are legume-lectin like; it reads PKTEFIFRGF…AHYVMGWSFS (250 aa). A helical membrane pass occupies residues 307 to 327; sequence LIVALSGVTVILLALLFFFVM. At 328–688 the chain is on the cytoplasmic side; the sequence is YKKRLQQGEV…VSSSSVISGR (361 aa). The 280-residue stretch at 361-640 folds into the Protein kinase domain; the sequence is FKENRIVGTG…LNGDDDVPEI (280 aa). Residues 367-375 and Lys391 contribute to the ATP site; that span reads VGTGGFGTV. The Proton acceptor role is filled by Asp490. The interval 662 to 688 is disordered; sequence VSSDRASSSVPSFSVTRVSSSSVISGR.

In the C-terminal section; belongs to the protein kinase superfamily. Ser/Thr protein kinase family. The protein in the N-terminal section; belongs to the leguminous lectin family.

It localises to the cell membrane. It catalyses the reaction L-seryl-[protein] + ATP = O-phospho-L-seryl-[protein] + ADP + H(+). The enzyme catalyses L-threonyl-[protein] + ATP = O-phospho-L-threonyl-[protein] + ADP + H(+). Involved in negative regulation of abscisic acid response in seed germination. The chain is Lectin-domain containing receptor kinase VI.3 (LECRK63) from Arabidopsis thaliana (Mouse-ear cress).